The following is a 444-amino-acid chain: MQRETVFDLIGVGFGPSNLALAVRLAERSGAHTLAHCFVERQPAFGWHRGMLLDDCRMQISFLKDLVTMRDPKSRYTFINYLFERGRLNEFVNLKNFYPTRVEFHDYLSWVADAFDDRVHYSETVLGIEPVRGDGARIDALRVLSRDAAGHERQRVTRALSVGVGGTPAIPDAFAALGRDRVIHSSSYLTDIDRLVASPDGERRRVAVIGAGQSAAEVFIDLARRFPHVDANLVMRAGALKPADDSPFVNEIFSPEFTDVVYAQPQDARRALLERYRDTNYAVVDRPLIEQIYEMLYLQRIDGTPRHALLANSAIEAAVRTADGRIELTLRDRMSGATRIERFDALVLATGYRRDTHSALLEGLAPHLGDALTRGDVTRDYLLATPEHFAPRIYLQGCCEDSHGRPTRCCRSWRAVRTKSARRSKTGSRPRTMKAWPGPRTKND.

FAD-binding positions include 40-48 and Gln-59; that span reads ERQPAFGWH. Lys-64 lines the substrate pocket. Val-125 contacts FAD. NADP(+) is bound by residues 211–214 and Arg-236; that span reads AGQS. Residues 250-253 and Asn-280 contribute to the substrate site; that span reads NEIF. Residue 280–282 participates in NADP(+) binding; the sequence is NYA. 408-410 contributes to the FAD binding site; the sequence is RCC. Over residues 420 to 432 the composition is skewed to basic residues; that stretch reads SARRSKTGSRPRT. Residues 420–444 are disordered; the sequence is SARRSKTGSRPRTMKAWPGPRTKND.

This sequence belongs to the lysine N(6)-hydroxylase/L-ornithine N(5)-oxygenase family. Requires FAD as cofactor.

The catalysed reaction is L-ornithine + NADPH + O2 = N(5)-hydroxy-L-ornithine + NADP(+) + H2O. It functions in the pathway siderophore biosynthesis; ornibactin biosynthesis. Functionally, catalyzes the conversion of L-ornithine to N(5)-hydroxyornithine, the first step in the biosynthesis of all hydroxamate-containing siderophores, such as ornibactin. This is L-ornithine N(5)-monooxygenase from Burkholderia cepacia (Pseudomonas cepacia).